Consider the following 184-residue polypeptide: ATP synthase subunit b 1 (184 aa).

A helical membrane pass occupies residues 4 to 24; the sequence is LSILAALAASPAMAATGPFFS.

Belongs to the ATPase B chain family. As to quaternary structure, F-type ATPases have 2 components, F(1) - the catalytic core - and F(0) - the membrane proton channel. F(1) has five subunits: alpha(3), beta(3), gamma(1), delta(1), epsilon(1). F(0) has three main subunits: a(1), b(2) and c(10-14). The alpha and beta chains form an alternating ring which encloses part of the gamma chain. F(1) is attached to F(0) by a central stalk formed by the gamma and epsilon chains, while a peripheral stalk is formed by the delta and b chains.

The protein localises to the cell inner membrane. In terms of biological role, f(1)F(0) ATP synthase produces ATP from ADP in the presence of a proton or sodium gradient. F-type ATPases consist of two structural domains, F(1) containing the extramembraneous catalytic core and F(0) containing the membrane proton channel, linked together by a central stalk and a peripheral stalk. During catalysis, ATP synthesis in the catalytic domain of F(1) is coupled via a rotary mechanism of the central stalk subunits to proton translocation. Component of the F(0) channel, it forms part of the peripheral stalk, linking F(1) to F(0). The polypeptide is ATP synthase subunit b 1 (Cereibacter sphaeroides (strain ATCC 17025 / ATH 2.4.3) (Rhodobacter sphaeroides)).